We begin with the raw amino-acid sequence, 82 residues long: RNA-binding protein Hfq (82 aa).

The region spanning 10–70 is the Sm domain; that stretch reads DLFLNTVRKS…ISTIMPSQPV (61 aa).

Belongs to the Hfq family. In terms of assembly, homohexamer.

Its function is as follows. RNA chaperone that binds small regulatory RNA (sRNAs) and mRNAs to facilitate mRNA translational regulation in response to envelope stress, environmental stress and changes in metabolite concentrations. Also binds with high specificity to tRNAs. This is RNA-binding protein Hfq from Chelativorans sp. (strain BNC1).